Consider the following 430-residue polypeptide: Gamma-glutamyl phosphate reductase (430 aa).

The protein belongs to the gamma-glutamyl phosphate reductase family.

Its subcellular location is the cytoplasm. It carries out the reaction L-glutamate 5-semialdehyde + phosphate + NADP(+) = L-glutamyl 5-phosphate + NADPH + H(+). The protein operates within amino-acid biosynthesis; L-proline biosynthesis; L-glutamate 5-semialdehyde from L-glutamate: step 2/2. In terms of biological role, catalyzes the NADPH-dependent reduction of L-glutamate 5-phosphate into L-glutamate 5-semialdehyde and phosphate. The product spontaneously undergoes cyclization to form 1-pyrroline-5-carboxylate. This is Gamma-glutamyl phosphate reductase from Corynebacterium diphtheriae (strain ATCC 700971 / NCTC 13129 / Biotype gravis).